A 195-amino-acid chain; its full sequence is Shikimate kinase (195 aa).

Residue 26 to 31 (GSGKST) participates in ATP binding. Serine 30 provides a ligand contact to Mg(2+). Substrate contacts are provided by aspartate 48, arginine 72, and glycine 94. Arginine 132 contributes to the ATP binding site. Arginine 151 is a substrate binding site.

It belongs to the shikimate kinase family. Monomer. Mg(2+) is required as a cofactor.

It localises to the cytoplasm. The catalysed reaction is shikimate + ATP = 3-phosphoshikimate + ADP + H(+). It functions in the pathway metabolic intermediate biosynthesis; chorismate biosynthesis; chorismate from D-erythrose 4-phosphate and phosphoenolpyruvate: step 5/7. Its function is as follows. Catalyzes the specific phosphorylation of the 3-hydroxyl group of shikimic acid using ATP as a cosubstrate. In Synechococcus sp. (strain RCC307), this protein is Shikimate kinase.